The sequence spans 464 residues: Cysteine--tRNA ligase 1 (464 aa).

C28 serves as a coordination point for Zn(2+). The short motif at 30-40 (VTIYDLCHIGH) is the 'HIGH' region element. Zn(2+)-binding residues include C209, H234, and E238. A 'KMSKS' region motif is present at residues 266–270 (KMSKS). K269 is an ATP binding site.

The protein belongs to the class-I aminoacyl-tRNA synthetase family. In terms of assembly, monomer. Zn(2+) is required as a cofactor.

It localises to the cytoplasm. It carries out the reaction tRNA(Cys) + L-cysteine + ATP = L-cysteinyl-tRNA(Cys) + AMP + diphosphate. This is Cysteine--tRNA ligase 1 from Photobacterium profundum (strain SS9).